The following is a 327-amino-acid chain: Aspartate carbamoyltransferase catalytic subunit (327 aa).

Carbamoyl phosphate contacts are provided by arginine 73 and threonine 74. Lysine 101 contacts L-aspartate. Positions 123, 153, and 156 each coordinate carbamoyl phosphate. L-aspartate-binding residues include arginine 186 and arginine 241. Carbamoyl phosphate-binding residues include glycine 282 and proline 283.

Belongs to the aspartate/ornithine carbamoyltransferase superfamily. ATCase family. As to quaternary structure, heterododecamer (2C3:3R2) of six catalytic PyrB chains organized as two trimers (C3), and six regulatory PyrI chains organized as three dimers (R2).

The catalysed reaction is carbamoyl phosphate + L-aspartate = N-carbamoyl-L-aspartate + phosphate + H(+). Its pathway is pyrimidine metabolism; UMP biosynthesis via de novo pathway; (S)-dihydroorotate from bicarbonate: step 2/3. Functionally, catalyzes the condensation of carbamoyl phosphate and aspartate to form carbamoyl aspartate and inorganic phosphate, the committed step in the de novo pyrimidine nucleotide biosynthesis pathway. The sequence is that of Aspartate carbamoyltransferase catalytic subunit from Acidithiobacillus ferrooxidans (strain ATCC 23270 / DSM 14882 / CIP 104768 / NCIMB 8455) (Ferrobacillus ferrooxidans (strain ATCC 23270)).